Consider the following 277-residue polypeptide: MTFAAPLEAKSIRFRARSFVAFTLTPEAPMVEWLQGLDHWIGNSPGYFAGRPVLLDLNVLKPAPSEIAALVAELGTRGIRIYAIELEGASLGPDLPPLLVGAKEATTEGLLPGRKGGQEGSGKPDGKAAEGRAPDHGTEGRADAGAAGKGKAGASKTDESGPQVSHYDSGTLMIKTPIRSGQAIMHAHGDVIVLGSVASGSEIVAAGSIHVYGTLRGRASAGALGNTAARIFCRRNEAELLSVDGWYITAEEMEGVSRGKPVQAFLDGDGLRVETLS.

Residues 107–168 are disordered; it reads TEGLLPGRKG…ESGPQVSHYD (62 aa). A compositionally biased stretch (basic and acidic residues) spans 122–142; it reads GKPDGKAAEGRAPDHGTEGRA.

Belongs to the MinC family. Interacts with MinD and FtsZ.

Functionally, cell division inhibitor that blocks the formation of polar Z ring septums. Rapidly oscillates between the poles of the cell to destabilize FtsZ filaments that have formed before they mature into polar Z rings. Prevents FtsZ polymerization. The chain is Probable septum site-determining protein MinC from Mesorhizobium japonicum (strain LMG 29417 / CECT 9101 / MAFF 303099) (Mesorhizobium loti (strain MAFF 303099)).